A 474-amino-acid polypeptide reads, in one-letter code: Amidophosphoribosyltransferase (474 aa).

Residues 1 to 10 constitute a propeptide that is removed on maturation; sequence MLGESEVRDK. Catalysis depends on Cys11, which acts as the Nucleophile. The Glutamine amidotransferase type-2 domain maps to 11 to 234; the sequence is CGIVGIYSQD…PGEILHLNRG (224 aa). Position 250 (Cys250) interacts with [4Fe-4S] cluster. Residues Ser297, Asp359, and Asp360 each contribute to the Mg(2+) site. [4Fe-4S] cluster is bound by residues Cys396, Cys447, and Cys450.

This sequence in the C-terminal section; belongs to the purine/pyrimidine phosphoribosyltransferase family. Mg(2+) is required as a cofactor. It depends on [4Fe-4S] cluster as a cofactor.

It carries out the reaction 5-phospho-beta-D-ribosylamine + L-glutamate + diphosphate = 5-phospho-alpha-D-ribose 1-diphosphate + L-glutamine + H2O. Its pathway is purine metabolism; IMP biosynthesis via de novo pathway; N(1)-(5-phospho-D-ribosyl)glycinamide from 5-phospho-alpha-D-ribose 1-diphosphate: step 1/2. In terms of biological role, catalyzes the formation of phosphoribosylamine from phosphoribosylpyrophosphate (PRPP) and glutamine. This Methanothermobacter thermautotrophicus (strain ATCC 29096 / DSM 1053 / JCM 10044 / NBRC 100330 / Delta H) (Methanobacterium thermoautotrophicum) protein is Amidophosphoribosyltransferase.